A 587-amino-acid polypeptide reads, in one-letter code: Trans-activating transcriptional regulatory protein (587 aa).

Belongs to the nucleopolyhedrovirus IE-1 protein family.

Functionally, regulatory transcriptional protein, which trans-activates gene expression from early baculovirus promoters. Can also trans-activate its own promoter, suggesting that it is autoregulated during normal infection of insect cells. In Bombyx mori nuclear polyhedrosis virus (BmNPV), this protein is Trans-activating transcriptional regulatory protein (IE1).